A 504-amino-acid polypeptide reads, in one-letter code: MEEFQGYLEIDGYQQHDFLYPLIFREYIYALAHGLNRSILLDNVGYDNKSSLLIIKRLISRMYQQNHLIISANYYKQNKFFGYNKNLYSQIISEGFAVIVEIPFSLRSVSSLEATEKEIIKSYNLRSLHSLFPFLEDKFPHLNYVSDVLIPYPIHLEILVQTLRYWVKDSSSLHLLRLFLHEYYNWNSLITPNKFIFSKSNQRLFLLLYNSHVCEYESILLFLRNQSSHLPLTSYGIFFEKIHFYEKIKYPGDEVFSNDFMVSILWFFKDPFMHYVRYQGKSILASKDTPLMMNKWKYYLVNLWQCHYYVWSQPGRIYINQLSKHSLYFLGYFASMQPNLSVVRSQMLENSFIMDNAMKKLDTLVPIIPLIVSLAKVKFCNALGHPISKSTWTDSSDFDIIDRFVRICRNISHYYSGSSRKKSLYRIKYILRLSCVKTLARKHKSTVRTFLKRLGSKLLEEFFTEEELIRSLIFPRTSYSLKKFYRGRIWYFDIFCINDLVNHE.

The protein belongs to the intron maturase 2 family. MatK subfamily.

It localises to the plastid. It is found in the chloroplast. Functionally, usually encoded in the trnK tRNA gene intron. Probably assists in splicing its own and other chloroplast group II introns. The sequence is that of Maturase K from Aruncus dioicus (Goat's beard).